The sequence spans 254 residues: Pimeloyl-[acyl-carrier protein] methyl ester esterase (254 aa).

The AB hydrolase-1 domain maps to 14–242; sequence LVLLHGWGMN…ASHAPFISHP (229 aa). Residues Trp-20, 82-83, and 143-147 contribute to the substrate site; these read SL and FLAIQ. The Nucleophile role is filled by Ser-82. Catalysis depends on residues Asp-207 and His-235. Position 235 (His-235) interacts with substrate.

Belongs to the AB hydrolase superfamily. Carboxylesterase BioH family. Monomer.

It is found in the cytoplasm. The enzyme catalyses 6-carboxyhexanoyl-[ACP] methyl ester + H2O = 6-carboxyhexanoyl-[ACP] + methanol + H(+). It participates in cofactor biosynthesis; biotin biosynthesis. Functionally, the physiological role of BioH is to remove the methyl group introduced by BioC when the pimeloyl moiety is complete. It allows to synthesize pimeloyl-ACP via the fatty acid synthetic pathway through the hydrolysis of the ester bonds of pimeloyl-ACP esters. The sequence is that of Pimeloyl-[acyl-carrier protein] methyl ester esterase from Aeromonas salmonicida (strain A449).